The sequence spans 847 residues: FAST kinase domain-containing protein 1, mitochondrial (847 aa).

Position 360 is an N6-acetyllysine (lysine 360). The RAP domain occupies 777-837 (IALEFLDSKA…KDARMDYLRE (61 aa)).

It belongs to the FAST kinase family. As to expression, expression detected in spleen, thymus, testis, ovary, colon, heart, smooth muscle, kidney, brain, lung, liver and white adipose tissue with highest expression in heart.

The protein resides in the mitochondrion. In terms of biological role, involved in the down-regulation of mitochondrial MT-ND3 mRNA levels which leads to decreased respiratory complex I abundance and activity. The protein is FAST kinase domain-containing protein 1, mitochondrial (FASTKD1) of Homo sapiens (Human).